A 96-amino-acid polypeptide reads, in one-letter code: Protein S100-A10 (96 aa).

An ancestral calcium site region spans residues 62-73 (DDCRKGQVNFRS).

It belongs to the S-100 family. In terms of assembly, tetramer of 2 light chains (p10) and 2 heavy chains (annexin II).

Its function is as follows. Because p10 induces the dimerization of annexin II (p36), it may function as a regulator of protein phosphorylation in that the p36 monomer is the preferred target (in vitro) of tyrosine-specific kinase. This Xenopus laevis (African clawed frog) protein is Protein S100-A10 (s100a10).